An 83-amino-acid chain; its full sequence is High-potential iron-sulfur protein (83 aa).

4 residues coordinate [4Fe-4S] cluster: C43, C46, C61, and C75.

This sequence belongs to the high-potential iron-sulfur protein (HiPIP) family. In terms of assembly, homodimer.

Its function is as follows. Specific class of high-redox-potential 4Fe-4S ferredoxins. Functions in anaerobic electron transport in most purple and in some other photosynthetic bacteria and in at least one genus (Paracoccus) of halophilic, denitrifying bacteria. The protein is High-potential iron-sulfur protein (hip) of Thermochromatium tepidum (Chromatium tepidum).